The primary structure comprises 281 residues: Acetyl-coenzyme A carboxylase carboxyl transferase subunit beta (281 aa).

Residues 23–281 (IWTKCGSCQA…SLLVKLHYKN (259 aa)) enclose the CoA carboxyltransferase N-terminal domain. 4 residues coordinate Zn(2+): cysteine 27, cysteine 30, cysteine 46, and cysteine 49. The C4-type zinc finger occupies 27 to 49 (CGSCQAVLYKSELEKLQEVCPKC).

Belongs to the AccD/PCCB family. Acetyl-CoA carboxylase is a heterohexamer composed of biotin carboxyl carrier protein (AccB), biotin carboxylase (AccC) and two subunits each of ACCase subunit alpha (AccA) and ACCase subunit beta (AccD). Zn(2+) is required as a cofactor.

It is found in the cytoplasm. The enzyme catalyses N(6)-carboxybiotinyl-L-lysyl-[protein] + acetyl-CoA = N(6)-biotinyl-L-lysyl-[protein] + malonyl-CoA. It functions in the pathway lipid metabolism; malonyl-CoA biosynthesis; malonyl-CoA from acetyl-CoA: step 1/1. Functionally, component of the acetyl coenzyme A carboxylase (ACC) complex. Biotin carboxylase (BC) catalyzes the carboxylation of biotin on its carrier protein (BCCP) and then the CO(2) group is transferred by the transcarboxylase to acetyl-CoA to form malonyl-CoA. The polypeptide is Acetyl-coenzyme A carboxylase carboxyl transferase subunit beta (Alteromonas mediterranea (strain DSM 17117 / CIP 110805 / LMG 28347 / Deep ecotype)).